The following is a 378-amino-acid chain: Quinolinate synthase (378 aa).

Iminosuccinate is bound by residues histidine 59 and serine 80. Cysteine 125 serves as a coordination point for [4Fe-4S] cluster. Residues tyrosine 151–asparagine 153 and serine 168 each bind iminosuccinate. Cysteine 212 contributes to the [4Fe-4S] cluster binding site. Residues histidine 238–glutamate 240 and threonine 255 each bind iminosuccinate. Cysteine 309 is a binding site for [4Fe-4S] cluster.

This sequence belongs to the quinolinate synthase family. Type 1 subfamily. Requires [4Fe-4S] cluster as cofactor.

The protein resides in the cytoplasm. The enzyme catalyses iminosuccinate + dihydroxyacetone phosphate = quinolinate + phosphate + 2 H2O + H(+). Its pathway is cofactor biosynthesis; NAD(+) biosynthesis; quinolinate from iminoaspartate: step 1/1. Catalyzes the condensation of iminoaspartate with dihydroxyacetone phosphate to form quinolinate. The sequence is that of Quinolinate synthase from Burkholderia cenocepacia (strain HI2424).